Reading from the N-terminus, the 285-residue chain is Pantothenate synthetase (285 aa).

30 to 37 (MGNLHRGH) is a binding site for ATP. Histidine 37 serves as the catalytic Proton donor. Glutamine 61 contacts (R)-pantoate. Glutamine 61 contributes to the beta-alanine binding site. Residue 149–152 (GRKD) participates in ATP binding. A (R)-pantoate-binding site is contributed by glutamine 155. ATP-binding positions include valine 178 and 186–189 (LSSR).

This sequence belongs to the pantothenate synthetase family. In terms of assembly, homodimer.

The protein localises to the cytoplasm. The enzyme catalyses (R)-pantoate + beta-alanine + ATP = (R)-pantothenate + AMP + diphosphate + H(+). Its pathway is cofactor biosynthesis; (R)-pantothenate biosynthesis; (R)-pantothenate from (R)-pantoate and beta-alanine: step 1/1. Catalyzes the condensation of pantoate with beta-alanine in an ATP-dependent reaction via a pantoyl-adenylate intermediate. The protein is Pantothenate synthetase of Halorhodospira halophila (strain DSM 244 / SL1) (Ectothiorhodospira halophila (strain DSM 244 / SL1)).